The sequence spans 240 residues: Homeobox protein notochord (240 aa).

Residues Met1–Pro13 are compositionally biased toward polar residues. Disordered regions lie at residues Met1–Gly21 and Gln208–Ser240. The homeobox DNA-binding region spans Thr149 to Gln208. Residues Pro213–Ser225 show a composition bias toward low complexity.

The protein localises to the nucleus. Transcription factor that controls node morphogenesis. Acts downstream of both FOXA2 and Brachyury (T) during notochord development. Is essential for cilia formation in the posterior notochord (PNC) and for left-right patterning; acts upstream of FOXJ1 and RFX3 in this process and is required for the expression of various components important for axonemal assembly and function. Plays a role in regulating axial versus paraxial cell fate. Activates the transcription of ciliary proteins C11orf97 homolog, FAM183B and SPACA9 in the embryonic ventral node. This Mus musculus (Mouse) protein is Homeobox protein notochord (Noto).